The chain runs to 241 residues: Ribosome-inactivating protein luffaculin 1 (241 aa).

Residues asparagine 28, asparagine 33, asparagine 77, and asparagine 84 are each glycosylated (N-linked (GlcNAc...) asparagine). The active site involves glutamate 159. Asparagine 205 carries an N-linked (GlcNAc...) asparagine glycan.

It belongs to the ribosome-inactivating protein family. Type 1 RIP subfamily.

The enzyme catalyses Endohydrolysis of the N-glycosidic bond at one specific adenosine on the 28S rRNA.. The sequence is that of Ribosome-inactivating protein luffaculin 1 from Luffa acutangula (Ridged gourd).